The following is a 425-amino-acid chain: Trigger factor (425 aa).

The 86-residue stretch at 163–248 (GDTAVIDFEG…VHEIKTKELP (86 aa)) folds into the PPIase FKBP-type domain.

Belongs to the FKBP-type PPIase family. Tig subfamily.

It is found in the cytoplasm. The catalysed reaction is [protein]-peptidylproline (omega=180) = [protein]-peptidylproline (omega=0). Functionally, involved in protein export. Acts as a chaperone by maintaining the newly synthesized protein in an open conformation. Functions as a peptidyl-prolyl cis-trans isomerase. The sequence is that of Trigger factor from Bacillus anthracis (strain A0248).